Reading from the N-terminus, the 88-residue chain is MHLSLARSAVLMLLLLFALGNFVVVQSGQITRDVDNGQLTDNRRNLQSKWKPVSLYMSRRGCNNSCQEHSDCESHCICTFRGCGAVNG.

Residues 1–27 (MHLSLARSAVLMLLLLFALGNFVVVQS) form the signal peptide. Residues 28–58 (GQITRDVDNGQLTDNRRNLQSKWKPVSLYMS) constitute a propeptide that is removed on maturation. 3 disulfide bridges follow: Cys-62–Cys-76, Cys-66–Cys-78, and Cys-72–Cys-83. 2 positions are modified to 4-carboxyglutamate; partial: Glu-68 and Glu-73. Position 87 is an asparagine amide (Asn-87).

In terms of processing, exists in 4 different forms, depending on gamma-carboxyglutamations. Tx9a-EE does not contain gamma-carboxyglutamate, tx9a-E/gamma has one gamma-carboxyglutamate at position 73, tx9a-gamma/E has one gamma-carboxyglutamate at position 68, and tx9a-agmma/gamma has two gamma-carboxyglutamates at positions 68 and 73. Expressed by the venom duct. All different gamma-carboxyalted forms are mostly present in part 2, part 3 and part 4 of the venom duct. They are also found in part 1 (proximal part near the venom bulb) and part 5, but in lower quantity.

It localises to the secreted. In terms of biological role, neurotoxin. In vivo, intracranial injection into mice of 10 pmol/g of the peptide induces running in circles and hyperactivity. At higher doses (50 pmol/g), the mice exhibit running and climbing symptoms for close to one hour. Between 130 and 150 pmol/g, characteristic 'spasmodic' symptomatology is elicited. A hand clap would make mice jump high and start running rapidly. When exposed to a loud hand clap, or if the cage cover were dropped, the mice lose motor control and exhibit seizure-like symptoms from which they eventually recover. At the highest doses tested (over 250 pmol/g), after the characteristic spasmodic symptomatology, lethality occurs. Injection of a similar dose range intramuscularly into Siamese fighting fish elicited no unusual symptomatology. The chain is Conotoxin tx9a from Conus textile (Cloth-of-gold cone).